The following is a 327-amino-acid chain: Phenylalanine--tRNA ligase alpha subunit (327 aa).

Glutamate 252 serves as a coordination point for Mg(2+).

It belongs to the class-II aminoacyl-tRNA synthetase family. Phe-tRNA synthetase alpha subunit type 1 subfamily. In terms of assembly, tetramer of two alpha and two beta subunits. Mg(2+) serves as cofactor.

Its subcellular location is the cytoplasm. The catalysed reaction is tRNA(Phe) + L-phenylalanine + ATP = L-phenylalanyl-tRNA(Phe) + AMP + diphosphate + H(+). This Cronobacter sakazakii (strain ATCC BAA-894) (Enterobacter sakazakii) protein is Phenylalanine--tRNA ligase alpha subunit.